Consider the following 345-residue polypeptide: Serpentine receptor class beta-13 (345 aa).

Residues 1–22 are Extracellular-facing; that stretch reads MAGINQTKCDLGFQITFNTVYR. Asparagine 5 carries an N-linked (GlcNAc...) asparagine glycan. Residues 23 to 43 traverse the membrane as a helical segment; it reads FSQFYTFSVSSFAVPGLIYFM. At 44-58 the chain is on the cytoplasmic side; sequence FKRLFQLYFHGNLKT. Residues 59–79 form a helical membrane-spanning segment; sequence LLIAYFISILLYAVMLCFAFG. The Extracellular segment spans residues 80 to 103; sequence YQFFVPFFIKSNCDLIINKTLFKY. Asparagine 97 carries an N-linked (GlcNAc...) asparagine glycan. The helical transmembrane segment at 104–124 threads the bilayer; it reads IHTSVIFLLTTPMMFPLGFSI. Over 125-142 the chain is Cytoplasmic; it reads ERFTAMAMASRYENIRTL. The helical transmembrane segment at 143–163 threads the bilayer; sequence IGPVLVIFLIIPNCIIFYFLF. The Extracellular segment spans residues 164-189; that stretch reads QHETYDDTFISFLMLPNTTAVNFNTY. Residue asparagine 180 is glycosylated (N-linked (GlcNAc...) asparagine). Residues 190–210 traverse the membrane as a helical segment; sequence LWFLLYLNIGNLALNVLLLLV. Over 211 to 241 the chain is Cytoplasmic; that stretch reads HRKFKRRLLLHKTSLSTRYAIEEISQSSKFT. Residues 242–262 form a helical membrane-spanning segment; it reads LIITFTHLLFFGCNTICSILV. The Extracellular segment spans residues 263–280; sequence RVLGEPFFGSFINHSVAR. Residue asparagine 275 is glycosylated (N-linked (GlcNAc...) asparagine). Residues 281 to 301 traverse the membrane as a helical segment; sequence GVNCAVPTYNLVIVVVGFVSL. Residues 302–345 are Cytoplasmic-facing; that stretch reads SKLNSRRQQEVQTTVQLKTTGKEGARNYDNITANQWATITQIGF.

The protein belongs to the nematode receptor-like protein srb family. In terms of tissue distribution, expressed in the head sensory neurons ASI, ASK and AWB. Not expressed in male somatic gonads or sperm.

The protein localises to the cell membrane. It localises to the perikaryon. The protein resides in the cell projection. Its subcellular location is the dendrite. Its function is as follows. G-protein coupled receptor that antagonizes the negative effects of the gcy-35 oxygen sensor on spermatogenesis. This leads to the maintenance of mitochondrial function in developing spermatocytes and/or spermatids prior to testis maturation during the early larval stages. Regulates the navigational capacity of sperm during hyperoxic conditions ensuring the proper targeting of sperm derived from males to the fertilization site in the uterus of hermaphrodites. May act in the same signaling pathway as the neuropeptide flp-21. This chain is Serpentine receptor class beta-13, found in Caenorhabditis elegans.